A 350-amino-acid chain; its full sequence is MPVLHNRISNDELKAKMLAESEPRTTISFYKYFTIASPQQTRDALYQVFTALDVFGRVYLAHEGINAQISVPQSKLETFRQQLYTFDPALDGVRLNIALEDDGKSFWVLRMKVRDRIVADGIDDPTFDASNVGDYLKAADVNAMLDDPDAVFIDMRNHYEYEVGHFENALEIPADTFREQLPKAVEMLREHADKKIVMYCTGGIRCEKASAWMKHNGFNKVWHIEGGIIEYARRARAQGLPVRFIGKNFVFDERMGERISDEVIAHCHQCGASCDSHTNCKNDGCHLLFIQCPQCASKFNGCCSEQCCEELALPEEEQRRRRAGRENGNKIFNKSRGRLNSKLSIPDPAE.

The 95-residue stretch at 146–240 folds into the Rhodanese domain; sequence DDPDAVFIDM…YARRARAQGL (95 aa). Cysteine 200 functions as the Cysteine persulfide intermediate in the catalytic mechanism. A compositionally biased stretch (basic and acidic residues) spans 319-328; sequence RRRRAGRENG. The segment at 319–350 is disordered; that stretch reads RRRRAGRENGNKIFNKSRGRLNSKLSIPDPAE.

It belongs to the TrhO family.

The enzyme catalyses uridine(34) in tRNA + AH2 + O2 = 5-hydroxyuridine(34) in tRNA + A + H2O. Catalyzes oxygen-dependent 5-hydroxyuridine (ho5U) modification at position 34 in tRNAs. This Salmonella typhimurium (strain LT2 / SGSC1412 / ATCC 700720) protein is tRNA uridine(34) hydroxylase.